The following is a 156-amino-acid chain: Small ribosomal subunit protein uS7 (156 aa).

This sequence belongs to the universal ribosomal protein uS7 family. As to quaternary structure, part of the 30S ribosomal subunit. Contacts proteins S9 and S11.

Functionally, one of the primary rRNA binding proteins, it binds directly to 16S rRNA where it nucleates assembly of the head domain of the 30S subunit. Is located at the subunit interface close to the decoding center, probably blocks exit of the E-site tRNA. This chain is Small ribosomal subunit protein uS7, found in Carsonella ruddii.